The chain runs to 185 residues: Elongation factor P (185 aa).

It belongs to the elongation factor P family.

The protein resides in the cytoplasm. It functions in the pathway protein biosynthesis; polypeptide chain elongation. Its function is as follows. Involved in peptide bond synthesis. Stimulates efficient translation and peptide-bond synthesis on native or reconstituted 70S ribosomes in vitro. Probably functions indirectly by altering the affinity of the ribosome for aminoacyl-tRNA, thus increasing their reactivity as acceptors for peptidyl transferase. The polypeptide is Elongation factor P (Paraburkholderia phytofirmans (strain DSM 17436 / LMG 22146 / PsJN) (Burkholderia phytofirmans)).